Reading from the N-terminus, the 310-residue chain is Cytochrome f (310 aa).

Residues 1–26 (MNIKLTLLVLISIINLMIIQPIQTLA) form the signal peptide. Residues phenylalanine 27, cysteine 47, cysteine 50, and histidine 51 each contribute to the heme site. Residues 276 to 296 (IKGMIVFFFTVTIAQIFFVLK) traverse the membrane as a helical segment.

It belongs to the cytochrome f family. In terms of assembly, the 4 large subunits of the cytochrome b6-f complex are cytochrome b6, subunit IV (17 kDa polypeptide, petD), cytochrome f and the Rieske protein, while the 4 small subunits are PetG, PetL, PetM and PetN. The complex functions as a dimer. Heme serves as cofactor.

The protein localises to the plastid. It is found in the chloroplast thylakoid membrane. Functionally, component of the cytochrome b6-f complex, which mediates electron transfer between photosystem II (PSII) and photosystem I (PSI), cyclic electron flow around PSI, and state transitions. The protein is Cytochrome f of Gracilaria tenuistipitata var. liui (Red alga).